A 695-amino-acid chain; its full sequence is L-type lectin-domain containing receptor kinase S.7 (695 aa).

A signal peptide spans 1 to 23 (MPPRCRRLPLLFILLLAVRPLSA). The Extracellular segment spans residues 24–331 (AAASSIAAAP…NHRRRHLFYK (308 aa)). Residues 37 to 276 (YRRISWASNL…VERWTFRTFG (240 aa)) are legume-lectin like. 2 N-linked (GlcNAc...) asparagine glycosylation sites follow: N45 and N279. Pro residues predominate over residues 286–320 (PTKYIGPMPPNNQPLPPPPSPSPSPPPPSPPPPPH). Positions 286–323 (PTKYIGPMPPNNQPLPPPPSPSPSPPPPSPPPPPHPNH) are disordered. A helical transmembrane segment spans residues 332-352 (VLGGVLGGMVLLGLVVVGSAV). Topologically, residues 353 to 695 (LLGRSVRRKN…TANTAFFSCR (343 aa)) are cytoplasmic. T376 bears the Phosphothreonine mark. The residue at position 378 (S378) is a Phosphoserine. Residues T386 and T403 each carry the phosphothreonine modification. Positions 389–661 (FDSGNVIGVG…SMLDGTAPLI (273 aa)) constitute a Protein kinase domain. Residues 395-403 (IGVGGSGAT) and K418 contribute to the ATP site. The active-site Proton acceptor is the D514. A Phosphothreonine modification is found at T657.

It in the N-terminal section; belongs to the leguminous lectin family. This sequence in the C-terminal section; belongs to the protein kinase superfamily. Ser/Thr protein kinase family. In terms of assembly, interacts with INP1. Interaction with INP1 is required for DAF1 polar localization at the future aperture sites in tetrads. Autophosphorylated at Thr-376; Ser-378; Thr-386; Thr-403 and Thr-657. In terms of tissue distribution, expressed in roots, leaves, lemma, palea, pistil and anthers.

It is found in the cell membrane. The protein resides in the cytoplasm. The protein localises to the cytosol. It carries out the reaction L-seryl-[protein] + ATP = O-phospho-L-seryl-[protein] + ADP + H(+). The enzyme catalyses L-threonyl-[protein] + ATP = O-phospho-L-threonyl-[protein] + ADP + H(+). Functionally, legume-lectin receptor-like kinase required for normal pollen development and male fertility. Regulates pollen exine assembly and aperture development. Plays a critical role in annulus formation, and may participate in the formation of the fibrillar-granular layer underneath the operculum. May function by regulating the expression of genes involved in pollen exine development. Kinase activity is required for its function in pollen development. This Oryza sativa subsp. japonica (Rice) protein is L-type lectin-domain containing receptor kinase S.7.